The chain runs to 294 residues: Maltose/maltodextrin import ATP-binding protein MalK (294 aa).

An ABC transporter domain is found at 4–233 (VQLRNVTKAW…PADRFVAGFI (230 aa)). 36 to 43 (GPSGCGKS) serves as a coordination point for ATP.

Belongs to the ABC transporter superfamily. Maltooligosaccharide importer (TC 3.A.1.1.1) family. As to quaternary structure, the complex is composed of two ATP-binding proteins (MalK), two transmembrane proteins (MalG and MalK) and a solute-binding protein (MalE).

It is found in the cell inner membrane. It carries out the reaction D-maltose(out) + ATP + H2O = D-maltose(in) + ADP + phosphate + H(+). Part of the ABC transporter complex MalEFGK involved in maltose/maltodextrin import. Responsible for energy coupling to the transport system. This is Maltose/maltodextrin import ATP-binding protein MalK from Klebsiella aerogenes (Enterobacter aerogenes).